A 256-amino-acid polypeptide reads, in one-letter code: Trypsin, alkaline C (256 aa).

A signal peptide spans 1-17 (MRLFLALLALGFAAVAA). A propeptide spans 18–24 (VPANPQR) (activation peptide). A Peptidase S1 domain is found at 25–256 (IVGGSTTTIQ…RYTSWISNNS (232 aa)). Residues Cys55 and Cys71 are joined by a disulfide bond. Catalysis depends on charge relay system residues His70 and Asp115. Intrachain disulfides connect Cys180/Cys197 and Cys209/Cys233. Ser213 serves as the catalytic Charge relay system.

The protein belongs to the peptidase S1 family. As to expression, midgut.

It localises to the secreted. It is found in the extracellular space. It catalyses the reaction Preferential cleavage: Arg-|-Xaa, Lys-|-Xaa.. This Manduca sexta (Tobacco hawkmoth) protein is Trypsin, alkaline C.